Consider the following 215-residue polypeptide: Sodium channel regulatory subunit beta-2 (215 aa).

An N-terminal signal peptide occupies residues 1–29 (MHRDAWLPRPAFSLTGLSLFFSLVPSGRS). The Extracellular portion of the chain corresponds to 30-157 (MEVTVPTTLS…LEVPPERDST (128 aa)). An Ig-like C2-type domain is found at 32 to 154 (VTVPTTLSVL…QVLLEVPPER (123 aa)). 3 N-linked (GlcNAc...) asparagine glycosylation sites follow: Asn42, Asn66, and Asn74. 2 disulfide bridges follow: Cys50/Cys127 and Cys72/Cys75. A helical membrane pass occupies residues 158-179 (VAVIVGASVGGFLAVVILVLMV). At 180–215 (VKCVRRKKEQKLSTDDLKTEEEGKTDGEGNAEDGAK) the chain is on the cytoplasmic side. Residues 187-215 (KEQKLSTDDLKTEEEGKTDGEGNAEDGAK) form a disordered region. Residues 189–215 (QKLSTDDLKTEEEGKTDGEGNAEDGAK) are compositionally biased toward basic and acidic residues. Ser192 carries the post-translational modification Phosphoserine. Thr204 is subject to Phosphothreonine.

This sequence belongs to the sodium channel auxiliary subunit SCN2B (TC 8.A.17) family. A voltage-gated sodium (Nav) channel consists of an ion-conducting pore-forming alpha subunit functional on its own that is regulated by one or more beta subunits. The beta subunit SCN2B is disulfide-linked to the pore-forming alpha subunit. Interacts with SCN1A; regulatory subunit of SCN1A/Nav1.1. Interacts with SCN2A; regulatory subunit of SCN2A/Nav1.2. Interacts with SCN3A; regulatory subunit of SCN3A/Nav1.3. Interacts with SCN5A; regulatory subunit of SCN5A/Nav1.5. Interacts with SCN8A; regulatory subunit of SCN8A/Nav1.6. Interacts with SCN9A; regulatory subunit of SCN9A/Nav1.7. Interacts with SCN10A; regulatory subunit of SCN10A/Nav1.8. Interacts with TNR; may play a crucial role in clustering and regulation of activity of SCN2B-containing Nav channels at nodes of Ranvier.

The protein resides in the cell membrane. The protein localises to the cell projection. It localises to the axon. Regulatory subunit of multiple voltage-gated sodium (Nav) channels directly mediating the depolarization of excitable membranes. Navs, also called VGSCs (voltage-gated sodium channels) or VDSCs (voltage-dependent sodium channels), operate by switching between closed and open conformations depending on the voltage difference across the membrane. In the open conformation they allow Na(+) ions to selectively pass through the pore, along their electrochemical gradient. The influx of Na+ ions provokes membrane depolarization, initiating the propagation of electrical signals throughout cells and tissues. The accessory beta subunits participate in localization and functional modulation of the Nav channels. Modulates the activity of SCN1A/Nav1.1, SCN2A/Nav1.2, SCN2A/Nav1.3, SCN5A/Nav1.5, SCN8A/Nav1.6, SCN9A/Nav1.7 and SCN10A/Nav1.8. This chain is Sodium channel regulatory subunit beta-2, found in Rattus norvegicus (Rat).